We begin with the raw amino-acid sequence, 236 residues long: Phosphoribosylaminoimidazole-succinocarboxamide synthase (236 aa).

Belongs to the SAICAR synthetase family.

It catalyses the reaction 5-amino-1-(5-phospho-D-ribosyl)imidazole-4-carboxylate + L-aspartate + ATP = (2S)-2-[5-amino-1-(5-phospho-beta-D-ribosyl)imidazole-4-carboxamido]succinate + ADP + phosphate + 2 H(+). Its pathway is purine metabolism; IMP biosynthesis via de novo pathway; 5-amino-1-(5-phospho-D-ribosyl)imidazole-4-carboxamide from 5-amino-1-(5-phospho-D-ribosyl)imidazole-4-carboxylate: step 1/2. This is Phosphoribosylaminoimidazole-succinocarboxamide synthase from Chlorobium phaeobacteroides (strain DSM 266 / SMG 266 / 2430).